We begin with the raw amino-acid sequence, 170 residues long: Ecotin (170 aa).

The N-terminal stretch at 1-21 is a signal peptide; sequence MNKASVVFSGLLMAVSASAIA. Cysteine 78 and cysteine 115 are joined by a disulfide.

It belongs to the protease inhibitor I11 (ecotin) family. In terms of assembly, homodimer.

The protein localises to the periplasm. General inhibitor of pancreatic serine proteases: inhibits chymotrypsin, trypsin, elastases, factor X, kallikrein as well as a variety of other proteases. The protein is Ecotin of Serratia proteamaculans (strain 568).